The primary structure comprises 131 residues: MSDLALPAWQASLVAIGAVPGAWLRLRVVNHLEPMVPRKHWGTFAVNMVAAFALGLVLALQAKCAPESGASPLILLIGVGFFGSLSTFSTFAVEVLNTLREHRWSEALVLAVGSILGGLLAVAAGVGLANG.

A run of 4 helical transmembrane segments spans residues 4–24 (LALP…GAWL), 40–60 (HWGT…VLAL), 73–93 (LILL…TFAV), and 108–128 (LVLA…GVGL). Residues G83 and S86 each coordinate Na(+).

The protein belongs to the fluoride channel Fluc/FEX (TC 1.A.43) family.

The protein resides in the cell inner membrane. The catalysed reaction is fluoride(in) = fluoride(out). Its activity is regulated as follows. Na(+) is not transported, but it plays an essential structural role and its presence is essential for fluoride channel function. Functionally, fluoride-specific ion channel. Important for reducing fluoride concentration in the cell, thus reducing its toxicity. In Prochlorococcus marinus (strain MIT 9313), this protein is Fluoride-specific ion channel FluC 1.